Here is a 3432-residue protein sequence, read N- to C-terminus: Genome polyprotein (3432 aa).

The interaction with host EXOC1 stretch occupies residues 2–15; sequence TKKPGGPGKNRAIN. Over 2 to 109 the chain is Cytoplasmic; sequence TKKPGGPGKN…KKQNKRGGNE (108 aa). The segment at 37 to 72 is hydrophobic; homodimerization of capsid protein C; it reads LLDGRGPVRFVLALITFFKFTALAPTKALLGRWRAV. Residues 106–127 constitute a propeptide, ER anchor for the capsid protein C, removed in mature form by serine protease NS3; that stretch reads GGNESSIMWLASLAIVIACAGA. The chain crosses the membrane as a helical span at residues 110-130; that stretch reads SSIMWLASLAIVIACAGAMKL. Over 131-253 the chain is Extracellular; the sequence is SNFQGKLLMT…ATRYLMKTEN (123 aa). A glycan (N-linked (GlcNAc...) asparagine; by host) is linked at N142. Residues 254-274 form a helical membrane-spanning segment; it reads WIIRNPGYAFLAAALGWMLGS. The Cytoplasmic portion of the chain corresponds to 275–279; the sequence is NSGQR. Residues 280-294 traverse the membrane as a helical segment; the sequence is VVFTILLLLVAPAYS. The Extracellular segment spans residues 295–746; it reads FNCLGMGNRD…QVFGGAFRTL (452 aa). Disulfide bonds link C297-C324, C354-C410, C354-C415, C368-C399, C386-C410, and C386-C415. Residues 392-405 are fusion peptide; it reads DRGWGNGCGLFGKG. N448 carries N-linked (GlcNAc...) asparagine; by host glycosylation. Cystine bridges form between C484-C581 and C598-C629. A helical membrane pass occupies residues 747-767; that stretch reads FGGMSWITQGLMGALLLWMGV. Topologically, residues 768–773 are cytoplasmic; the sequence is NARDRS. A helical transmembrane segment spans residues 774–794; sequence IALAFLATGGVLVFLATNVHA. Topologically, residues 795–1219 are extracellular; it reads DTGCAIDITR…AFAEANSGGD (425 aa). 6 disulfides stabilise this stretch: C798/C809, C849/C937, C973/C1017, C1074/C1123, C1085/C1106, and C1107/C1110. N-linked (GlcNAc...) asparagine; by host glycans are attached at residues N924 and N1001. Residues 1220 to 1240 traverse the membrane as a helical segment; that stretch reads VLHLALIAVFKIQPAFLVMNM. The Cytoplasmic segment spans residues 1241 to 1250; it reads LSARWTNQEN. Residues 1251–1271 traverse the membrane as a helical segment; it reads MVLVLGAAFFQLASVDLQIGV. H1272 is a topological domain (lumenal). A helical membrane pass occupies residues 1273–1293; sequence GILNAAAIAWMIVRAITFPTT. At 1294–1309 the chain is on the cytoplasmic side; sequence STVAMPVLALLTPGMR. Residues 1310 to 1330 traverse the membrane as a helical segment; that stretch reads ALYLDTYRIILLVIGICSLLQ. Over 1331-1341 the chain is Lumenal; the sequence is ERRKTMAKKKG. A helical transmembrane segment spans residues 1342–1362; it reads AVLLGLALTSTGWFSPTTIAA. Topologically, residues 1363 to 1374 are cytoplasmic; it reads GLMVCNPNKKRG. Residues 1375-1395 form a helical membrane-spanning segment; the sequence is WPATEFLSAVGLMFAIVGGLA. Residues 1396–1398 lie on the Lumenal side of the membrane; that stretch reads ELD. The chain crosses the membrane as a helical span at residues 1399–1419; sequence IESMSIPFMLAGLMAVSYVIS. Topologically, residues 1420-1476 are cytoplasmic; that stretch reads GKATDMWLDRAADISWEMEAAITGSSRRLDVKLDDDGDFHLIDDPGVPWKVWLLRMS. An interacts with and activates NS3 protease region spans residues 1427 to 1466; sequence LDRAADISWEMEAAITGSSRRLDVKLDDDGDFHLIDDPGV. The helical intramembrane region spans 1477 to 1497; that stretch reads CIGLAALTPWAIVPAAFGYWL. The Cytoplasmic segment spans residues 1498–2173; sequence TLKTTKRGGV…RMALEELPDA (676 aa). Positions 1505–1682 constitute a Peptidase S7 domain; sequence GGVFWDTPSP…DRQEEPVPDA (178 aa). Residues H1555, D1579, and S1639 each act as charge relay system; for serine protease NS3 activity in the active site. Positions 1685-1841 constitute a Helicase ATP-binding domain; sequence PSMLKKRQMT…DSNAPIHDLQ (157 aa). An important for RNA-binding region spans residues 1689 to 1692; the sequence is KKRQ. Position 1698–1705 (1698–1705) interacts with ATP; it reads LHPGSGKT. The DEAH box motif lies at 1789-1792; it reads DEAH. The 166-residue stretch at 1852 to 2017 folds into the Helicase C-terminal domain; the sequence is GYEWITEYAG…GLVAQLYGPE (166 aa). An N6-acetyllysine; by host modification is found at K1893. The disordered stretch occupies residues 1950–1969; the sequence is NPSPITSASAAQRRGRVGRN. Residues 2168–2172 are regulates the ATPase activity of NS3 helicase; it reads EELPD. Residues 2174–2194 form a helical membrane-spanning segment; sequence LETITLIVAITVMTGGFFLLM. The Lumenal portion of the chain corresponds to 2195-2199; that stretch reads MQRKG. Positions 2200–2220 form an intramembrane region, helical; the sequence is IGKMGLGALVLTLATFFLWAA. Position 2221 (E2221) is a topological domain, lumenal. Residues 2222-2242 form a helical membrane-spanning segment; the sequence is VPGTKIAGTLLVALLLMVVLI. At 2243 to 2257 the chain is on the cytoplasmic side; the sequence is PEPEKQRSQTDNQLA. A helical transmembrane segment spans residues 2258–2278; it reads VFLICVLTVVGVVAANEYGML. Residues 2279 to 2311 lie on the Lumenal side of the membrane; it reads EKTKADLKSMFGGRTQAPGLTGLPSMALDLRPA. Residues 2312–2332 constitute an intramembrane region (helical); that stretch reads TAWALYGGSTVVLTPLLKHLI. Topologically, residues 2333–2368 are lumenal; that stretch reads TSEYVTTSLASISSQAGSLFVLPRGVPFTDLDLTVG. The chain crosses the membrane as a helical span at residues 2369–2389; the sequence is LVFLGCWGQITLTTFLTAMVL. Over 2390–2444 the chain is Cytoplasmic; it reads VTLHYGYMLPGWQAEALRAAQRRTAAGIMKNAVVDGMVATDVPELERTTPLMQKK. A helical transmembrane segment spans residues 2445 to 2465; sequence VGQVLLIGVSVAAFLVNPNVT. Residues 2466-2469 are Lumenal-facing; it reads TVRE. Residues 2470 to 2490 form a helical membrane-spanning segment; it reads AGVLVTAATLTLWDNGASAVW. Residues 2491–3432 lie on the Cytoplasmic side of the membrane; that stretch reads NSTTATGLCH…DVLIQEDRVI (942 aa). Residues 2528-2793 enclose the mRNA cap 0-1 NS5-type MT domain; the sequence is GRPGGRTLGE…DVNLGSGTRA (266 aa). S2583 is an S-adenosyl-L-methionine binding site. At S2583 the chain carries Phosphoserine. The active-site For 2'-O-MTase activity is the K2588. S-adenosyl-L-methionine is bound by residues G2613, W2614, T2631, K2632, D2658, and V2659. Catalysis depends on D2673, which acts as the For 2'-O-MTase activity. I2674 is an S-adenosyl-L-methionine binding site. Residues K2709 and E2745 each act as for 2'-O-MTase activity in the active site. Y2747 lines the S-adenosyl-L-methionine pocket. The Zn(2+) site is built by E2967, H2971, C2976, and C2979. In terms of domain architecture, RdRp catalytic spans 3057–3209; that stretch reads GKMYADDTAG…KPLDDRFATA (153 aa). H3244, C3260, and C3379 together coordinate Zn(2+).

In the N-terminal section; belongs to the class I-like SAM-binding methyltransferase superfamily. mRNA cap 0-1 NS5-type methyltransferase family. In terms of assembly, homodimer. Interacts (via N-terminus) with host EXOC1 (via C-terminus); this interaction results in EXOC1 degradation through the proteasome degradation pathway. Forms heterodimers with envelope protein E in the endoplasmic reticulum and Golgi. As to quaternary structure, homodimer; in the endoplasmic reticulum and Golgi. Interacts with protein prM. Interacts with non-structural protein 1. Interacts with host HSPA5. In terms of assembly, homodimer; Homohexamer when secreted. Interacts with envelope protein E. NS1 interacts with NS4B. Interacts with host complement protein CFH; this interaction leads to the degradation of C3. Interacts (via N-terminus) with serine protease NS3. As to quaternary structure, forms a heterodimer with serine protease NS3. May form homooligomers. In terms of assembly, forms a heterodimer with NS2B. Interacts with non-structural protein 2A (via N-terminus). Interacts with NS4B. Interacts with unphosphorylated RNA-directed RNA polymerase NS5; this interaction stimulates RNA-directed RNA polymerase NS5 guanylyltransferase activity. Interacts with host ILF2. Interacts with serine protease NS3. As to quaternary structure, homodimer. Interacts with host STAT2; this interaction inhibits the phosphorylation of the latter, and, when all viral proteins are present (polyprotein), targets STAT2 for degradation. Interacts with serine protease NS3. It depends on Mn(2+) as a cofactor. The cofactor is Mg(2+). Specific enzymatic cleavages in vivo yield mature proteins. Cleavages in the lumen of endoplasmic reticulum are performed by host signal peptidase, whereas cleavages in the cytoplasmic side are performed by serine protease NS3. Signal cleavage at the 2K-4B site requires a prior NS3 protease-mediated cleavage at the 4A-2K site. Post-translationally, cleaved in post-Golgi vesicles by a host furin, releasing the mature small envelope protein M, and peptide pr. This cleavage is incomplete as up to 30% of viral particles still carry uncleaved prM. In terms of processing, N-glycosylated. N-glycosylated. The excreted form is glycosylated and this is required for efficient secretion of the protein from infected cells. Post-translationally, acetylated by host KAT5. Acetylation modulates NS3 RNA-binding and unwinding activities and plays an important positive role for viral replication. In terms of processing, phosphorylated on serines residues. This phosphorylation may trigger NS5 nuclear localization.

The protein resides in the host endoplasmic reticulum membrane. It localises to the virion. It is found in the host nucleus. The protein localises to the host cytoplasm. Its subcellular location is the host perinuclear region. The protein resides in the secreted. It localises to the virion membrane. It is found in the host cell surface. It catalyses the reaction Selective hydrolysis of -Xaa-Xaa-|-Yaa- bonds in which each of the Xaa can be either Arg or Lys and Yaa can be either Ser or Ala.. The catalysed reaction is a ribonucleoside 5'-triphosphate + H2O = a ribonucleoside 5'-diphosphate + phosphate + H(+). The enzyme catalyses RNA(n) + a ribonucleoside 5'-triphosphate = RNA(n+1) + diphosphate. It carries out the reaction ATP + H2O = ADP + phosphate + H(+). It catalyses the reaction a 5'-end (5'-triphosphoguanosine)-ribonucleoside in mRNA + S-adenosyl-L-methionine = a 5'-end (N(7)-methyl 5'-triphosphoguanosine)-ribonucleoside in mRNA + S-adenosyl-L-homocysteine. The catalysed reaction is a 5'-end (N(7)-methyl 5'-triphosphoguanosine)-ribonucleoside in mRNA + S-adenosyl-L-methionine = a 5'-end (N(7)-methyl 5'-triphosphoguanosine)-(2'-O-methyl-ribonucleoside) in mRNA + S-adenosyl-L-homocysteine + H(+). Functionally, plays a role in virus budding by binding to the cell membrane and gathering the viral RNA into a nucleocapsid that forms the core of a mature virus particle. During virus entry, may induce genome penetration into the host cytoplasm after hemifusion induced by the surface proteins. Can migrate to the cell nucleus where it modulates host functions. Overcomes the anti-viral effects of host EXOC1 by sequestering and degrading the latter through the proteasome degradation pathway. In terms of biological role, inhibits RNA silencing by interfering with host Dicer. Its function is as follows. Prevents premature fusion activity of envelope proteins in trans-Golgi by binding to envelope protein E at pH6.0. After virion release in extracellular space, gets dissociated from E dimers. Acts as a chaperone for envelope protein E during intracellular virion assembly by masking and inactivating envelope protein E fusion peptide. prM is the only viral peptide matured by host furin in the trans-Golgi network probably to avoid catastrophic activation of the viral fusion activity in acidic Golgi compartment prior to virion release. prM-E cleavage is inefficient, and many virions are only partially matured. These uncleaved prM would play a role in immune evasion. Functionally, may play a role in virus budding. Exerts cytotoxic effects by activating a mitochondrial apoptotic pathway through M ectodomain. May display a viroporin activity. In terms of biological role, binds to host cell surface receptor and mediates fusion between viral and cellular membranes. Efficient virus attachment to cell is, at least in part, mediated by host HSPA5. Envelope protein is synthesized in the endoplasmic reticulum in the form of heterodimer with protein prM. They play a role in virion budding in the ER, and the newly formed immature particle is covered with 60 spikes composed of heterodimer between precursor prM and envelope protein E. The virion is transported to the Golgi apparatus where the low pH causes dissociation of PrM-E heterodimers and formation of E homodimers. prM-E cleavage is inefficient, and many virions are only partially matured. These uncleaved prM would play a role in immune evasion. Its function is as follows. Involved in immune evasion, pathogenesis and viral replication. Once cleaved off the polyprotein, is targeted to three destinations: the viral replication cycle, the plasma membrane and the extracellular compartment. Essential for viral replication. Required for formation of the replication complex and recruitment of other non-structural proteins to the ER-derived membrane structures. Excreted as a hexameric lipoparticle that plays a role against host immune response. Antagonizing the complement function. Binds to the host macrophages and dendritic cells. Inhibits signal transduction originating from Toll-like receptor 3 (TLR3). Component of the viral RNA replication complex that functions in virion assembly and antagonizes the host alpha/beta interferon antiviral response. Functionally, required cofactor for the serine protease function of NS3. May have membrane-destabilizing activity and form viroporins. In terms of biological role, displays three enzymatic activities: serine protease, NTPase and RNA helicase. NS3 serine protease, in association with NS2B, performs its autocleavage and cleaves the polyprotein at dibasic sites in the cytoplasm: C-prM, NS2A-NS2B, NS2B-NS3, NS3-NS4A, NS4A-2K and NS4B-NS5. NS3 RNA helicase binds RNA and unwinds dsRNA in the 3' to 5' direction. Its function is as follows. Regulates the ATPase activity of the NS3 helicase activity. NS4A allows NS3 helicase to conserve energy during unwinding. Functions as a signal peptide for NS4B and is required for the interferon antagonism activity of the latter. Functionally, induces the formation of ER-derived membrane vesicles where the viral replication takes place. Inhibits interferon (IFN)-induced host STAT1 phosphorylation and nuclear translocation, thereby preventing the establishment of cellular antiviral state by blocking the IFN-alpha/beta pathway. Inhibits STAT2 translocation in the nucleus after IFN-alpha treatment. In terms of biological role, replicates the viral (+) and (-) RNA genome. Performs the capping of genomes in the cytoplasm. NS5 methylates viral RNA cap at guanine N-7 and ribose 2'-O positions. Besides its role in RNA genome replication, also prevents the establishment of cellular antiviral state by blocking the interferon-alpha/beta (IFN-alpha/beta) signaling pathway. Inhibits host TYK2 and STAT2 phosphorylation, thereby preventing activation of JAK-STAT signaling pathway. The protein is Genome polyprotein of Japanese encephalitis virus (strain M28) (JEV).